We begin with the raw amino-acid sequence, 858 residues long: Taste receptor type 1 member 3 (858 aa).

The first 20 residues, 1–20, serve as a signal peptide directing secretion; that stretch reads MPGLAILGLSLAAFLELGMG. The Extracellular portion of the chain corresponds to 21–575; that stretch reads SSLCLSQQFK…FLAWGEPAVL (555 aa). N-linked (GlcNAc...) asparagine glycosylation is found at asparagine 85, asparagine 130, asparagine 203, asparagine 264, asparagine 379, asparagine 387, asparagine 418, asparagine 439, and asparagine 482. Residues 576–596 traverse the membrane as a helical segment; that stretch reads SLLLLLCLVLGLTLAALGLFV. Residues 597-610 are Cytoplasmic-facing; it reads HYWDSPLVQASGGS. The chain crosses the membrane as a helical span at residues 611-631; the sequence is LFCFGLICLGLFCLSVLLFPG. Residues 632–644 are Extracellular-facing; the sequence is RPRSASCLAQQPM. The chain crosses the membrane as a helical span at residues 645 to 665; sequence AHLPLTGCLSTLFLQAAEIFV. Over 666 to 687 the chain is Cytoplasmic; that stretch reads ESELPLSWANWLCSYLRGPWAW. A helical transmembrane segment spans residues 688 to 708; sequence LVVLLATLVEAALCAWYLMAF. Residues 709–735 lie on the Extracellular side of the membrane; it reads PPEVVTDWQVLPTEVLEHCRMRSWVSL. Residues 736-756 form a helical membrane-spanning segment; that stretch reads GLVHITNAVLAFLCFLGTFLV. At 757–767 the chain is on the cytoplasmic side; that stretch reads QSQPGRYNRAR. The chain crosses the membrane as a helical span at residues 768–788; that stretch reads GLTFAMLAYFIIWVSFVPLLA. Over 789–796 the chain is Extracellular; the sequence is NVQVAYQP. A helical membrane pass occupies residues 797-817; it reads AVQMGAILFCALGILATFHLP. Over 818 to 858 the chain is Cytoplasmic; it reads KCYVLLWLPELNTQEFFLGRSPKEASDGNSGSSEATRGHSE. A disordered region spans residues 839 to 858; the sequence is PKEASDGNSGSSEATRGHSE.

The protein belongs to the G-protein coupled receptor 3 family. TAS1R subfamily. In terms of assembly, forms homodimers or heterodimers with TAS1R1 and TAS1R2.

The protein localises to the cell membrane. Functionally, putative taste receptor. TAS1R1/TAS1R3 responds to the umami taste stimulus (the taste of monosodium glutamate) and also to most of the 20 standard L-amino acids, but not to their D-enantiomers or other compounds. TAS1R2/TAS1R3 recognizes diverse natural and synthetic sweeteners. TAS1R3 is essential for the recognition and response to the disaccharide trehalose. Sequence differences within and between species can significantly influence the selectivity and specificity of taste responses. The chain is Taste receptor type 1 member 3 (Tas1r3) from Rattus norvegicus (Rat).